The following is a 108-amino-acid chain: UPF0235 protein APE_0182.1 (108 aa).

The protein belongs to the UPF0235 family.

The sequence is that of UPF0235 protein APE_0182.1 from Aeropyrum pernix (strain ATCC 700893 / DSM 11879 / JCM 9820 / NBRC 100138 / K1).